The primary structure comprises 130 residues: Glycine cleavage system H protein (130 aa).

Residues 24–106 (SVTVGITEHA…YGDGWIMRIQ (83 aa)) form the Lipoyl-binding domain. Position 65 is an N6-lipoyllysine (lysine 65).

The protein belongs to the GcvH family. The glycine cleavage system is composed of four proteins: P, T, L and H. (R)-lipoate is required as a cofactor.

Functionally, the glycine cleavage system catalyzes the degradation of glycine. The H protein shuttles the methylamine group of glycine from the P protein to the T protein. This chain is Glycine cleavage system H protein, found in Halorhodospira halophila (strain DSM 244 / SL1) (Ectothiorhodospira halophila (strain DSM 244 / SL1)).